An 830-amino-acid chain; its full sequence is FYN-binding protein 1 (830 aa).

Positions 1–501 are disordered; the sequence is MDGKTDVKSL…REKKEQELRK (501 aa). Lysine 13 carries the post-translational modification N6-acetyllysine. Polar residues predominate over residues 15–55; the sequence is NTGSNPTEEVSTSSRPFKVAGQNSPSGIQSKKNLFDNQGNA. Phosphoserine occurs at positions 38 and 56. Residues 79–89 are compositionally biased toward basic and acidic residues; it reads TYEEKSEKEPK. Serine 233 is subject to Phosphoserine. Basic and acidic residues-rich tracts occupy residues 248-259 and 284-296; these read PAKEDPEDKDHG and NSEEKKEERKTDI. The residue at position 329 (serine 329) is a Phosphoserine. A compositionally biased stretch (basic and acidic residues) spans 330-339; that stretch reads QEKEGDKDSA. Composition is skewed to pro residues over residues 344–362 and 391–407; these read KPLPPLSVLGPPPSKPSRP and LPPPPPTQPASQPPLPA. The tract at residues 347-447 is interaction with SKAP1; it reads PPLSVLGPPP…QDGVMHSDGT (101 aa). Over residues 450–464 the composition is skewed to acidic residues; sequence LEEEQESDGEMYEDI. Serine 456 is modified (phosphoserine). Positions 461-464 match the SH2-binding motif; that stretch reads YEDI. Positions 465-500 are enriched in basic and acidic residues; it reads ESSKERDKKREKEEKKRLELERKEQKEREKKEQELR. Positions 465-502 form a coiled coil; it reads ESSKERDKKREKEEKKRLELERKEQKEREKKEQELRKK. Positions 479-486 match the Nuclear localization signal motif; that stretch reads KKRLELER. Residues 510-571 form the SH3 1 domain; that stretch reads QVIHHAKACC…KTTAVKIDYD (62 aa). Phosphotyrosine is present on tyrosine 570. Phosphoserine is present on serine 572. The SH2-binding; to LCP2 motif lies at 595 to 598; that stretch reads YDDV. 2 disordered regions span residues 601–646 and 660–739; these read QDAP…DEKT and KDER…EKEE. Positions 621–636 are enriched in acidic residues; sequence ADDDIYDGIEEEDADD. The SH2-binding; to FYN motif lies at 626 to 629; the sequence is YDGI. Residues 660 to 675 are compositionally biased toward basic and acidic residues; the sequence is KDERKKSIREKPKVSE. Residues 693 to 703 are compositionally biased toward acidic residues; that stretch reads VGEEVYDDVDA. Residue tyrosine 698 is modified to Phosphotyrosine. Basic and acidic residues predominate over residues 722-739; sequence TKAEEKDPKKLKKQEKEE. The Nuclear localization signal motif lies at 732–739; the sequence is LKKQEKEE. The SH3 2 domain maps to 747–815; sequence KYDGEIRVLY…LRSYLVDNDG (69 aa).

In terms of assembly, part of a complex consisting of SKAP2, FYB1 and PTPNS1. Part of a complex consisting of SKAP2, FYB1 and LILRB3. Part of a complex consisting of SKAP1, FYB1 and CLNK. Interacts with CLNK (via its SH2 domain) and FYN; this interaction allows SKAP1 and FYB1 to recruit FYN to the complex, thus promoting the phosphorylation of CLNK by FYN. Interacts with FYN. Interacts with LCP2. Interacts with SKAP1. Interacts with SKAP2. Interacts with FASLG. Interacts with EVL. Interacts with TMEM47. Interacts with LCK. In terms of processing, T-cell receptor ligation leads to increased tyrosine phosphorylation.

It localises to the cytoplasm. It is found in the nucleus. Its subcellular location is the cell junction. Functionally, acts as an adapter protein of the FYN and LCP2 signaling cascades in T-cells. May play a role in linking T-cell signaling to remodeling of the actin cytoskeleton. Modulates the expression of IL2. Involved in platelet activation. Prevents the degradation of SKAP1 and SKAP2. May be involved in high affinity immunoglobulin epsilon receptor signaling in mast cells. The sequence is that of FYN-binding protein 1 from Rattus norvegicus (Rat).